Reading from the N-terminus, the 167-residue chain is Thioredoxin-like protein HI_1115 (167 aa).

A helical membrane pass occupies residues 10–27; that stretch reads GLSLFLTFIVITSILDFV. A Thioredoxin domain is found at 30–167; the sequence is PVVPEEINKI…VRLFFAEFFG (138 aa). Residues C69 and C72 are joined by a disulfide bond.

It belongs to the thioredoxin family.

It localises to the cell membrane. This Haemophilus influenzae (strain ATCC 51907 / DSM 11121 / KW20 / Rd) protein is Thioredoxin-like protein HI_1115.